Reading from the N-terminus, the 223-residue chain is Sugar fermentation stimulation protein homolog (223 aa).

Belongs to the SfsA family.

In Thermosipho melanesiensis (strain DSM 12029 / CIP 104789 / BI429), this protein is Sugar fermentation stimulation protein homolog.